Here is a 102-residue protein sequence, read N- to C-terminus: Large ribosomal subunit protein uL24 (102 aa).

Belongs to the universal ribosomal protein uL24 family. As to quaternary structure, part of the 50S ribosomal subunit.

Functionally, one of two assembly initiator proteins, it binds directly to the 5'-end of the 23S rRNA, where it nucleates assembly of the 50S subunit. One of the proteins that surrounds the polypeptide exit tunnel on the outside of the subunit. The polypeptide is Large ribosomal subunit protein uL24 (Lysinibacillus sphaericus (strain C3-41)).